A 420-amino-acid chain; its full sequence is Diaminopimelate decarboxylase (420 aa).

At K54 the chain carries N6-(pyridoxal phosphate)lysine. H191 contacts substrate. Pyridoxal 5'-phosphate is bound by residues G227 and 268-271; that span reads EPGR. Positions 271, 307, and 311 each coordinate substrate. C342 acts as the Proton donor in catalysis. The substrate site is built by E343 and Y378. Pyridoxal 5'-phosphate is bound at residue Y378.

Belongs to the Orn/Lys/Arg decarboxylase class-II family. LysA subfamily. Requires pyridoxal 5'-phosphate as cofactor.

The catalysed reaction is meso-2,6-diaminopimelate + H(+) = L-lysine + CO2. Its pathway is amino-acid biosynthesis; L-lysine biosynthesis via DAP pathway; L-lysine from DL-2,6-diaminopimelate: step 1/1. Is activated by 2,3-dimercaptopropan-1-ol. Specifically catalyzes the decarboxylation of meso-diaminopimelate (meso-DAP) to L-lysine. Is not active against the DD- or LL-isomers of diaminopimelate. In Escherichia coli (strain K12), this protein is Diaminopimelate decarboxylase.